The chain runs to 443 residues: Transcriptional adapter 2-alpha (443 aa).

Position 6 is a phosphoserine (Ser6). A ZZ-type zinc finger spans residues 12–69 (SDKPPCRGCSSYLTEPYIKCAECGPPPFFLCLQCFTRGFEYKKHQSDHTYEIMTSDFP). Residues Cys17, Cys20, Cys31, Cys34, Cys42, Cys45, His55, and His59 each coordinate Zn(2+). The SANT domain maps to 70-122 (VLDPSWTAQEEMALLEAVMDCGFGNWQDVANQMCTKTKEECEKHYMKHFINNP). Residues Lys132 and Lys138 each participate in a glycyl lysine isopeptide (Lys-Gly) (interchain with G-Cter in SUMO2) cross-link. An SWIRM domain is found at 356 to 443 (NSGRRSAPPL…LIREGYITKA (88 aa)). A DNA-binding region spans residues 426-435 (KTRKIYDFLI).

As to quaternary structure, interacts with GCN5. Interacts with NR3C1. Associated with the P/CAF protein in the PCAF complex. Component of the PCAF complex, at least composed of TADA2L/ADA2, TADA3L/ADA3, TAF5L/PAF65-beta, TAF6L/PAF65-alpha, TAF10/TAFII30, TAF12/TAFII20, TAF9/TAFII31 and TRRAP. Component of the ADA2A-containing complex (ATAC), composed of KAT14, KAT2A, TADA2L, TADA3L, ZZ3, MBIP, WDR5, YEATS2, CCDC101 and DR1. Interacts with CCDC134.

The protein localises to the nucleus. It localises to the chromosome. In terms of biological role, component of the ATAC complex, a complex with histone acetyltransferase activity on histones H3 and H4. Required for the function of some acidic activation domains, which activate transcription from a distant site. Binds double-stranded DNA. Binds dinucleosomes, probably at the linker region between neighboring nucleosomes. Plays a role in chromatin remodeling. May promote TP53/p53 'Lys-321' acetylation, leading to reduced TP53 stability and transcriptional activity. May also promote XRCC6 acetylation thus facilitating cell apoptosis in response to DNA damage. The chain is Transcriptional adapter 2-alpha (Tada2a) from Mus musculus (Mouse).